Here is a 133-residue protein sequence, read N- to C-terminus: Small ribosomal subunit protein uS11 (133 aa).

The protein belongs to the universal ribosomal protein uS11 family. In terms of assembly, part of the 30S ribosomal subunit. Interacts with proteins S7 and S18. Binds to IF-3.

In terms of biological role, located on the platform of the 30S subunit, it bridges several disparate RNA helices of the 16S rRNA. Forms part of the Shine-Dalgarno cleft in the 70S ribosome. This is Small ribosomal subunit protein uS11 from Cupriavidus metallidurans (strain ATCC 43123 / DSM 2839 / NBRC 102507 / CH34) (Ralstonia metallidurans).